The primary structure comprises 76 residues: Conotoxin Cl6.4 (76 aa).

An N-terminal signal peptide occupies residues 1-19 (MTLTFLLVVALCMLTTCHT). A propeptide spanning residues 20–47 (ENYRDSQKVSPVRSIGKTQFARSLRLSE) is cleaved from the precursor. 3 cysteine pairs are disulfide-bonded: C50-C66, C57-C70, and C65-C75.

As to expression, expressed by the venom duct.

Its subcellular location is the secreted. The chain is Conotoxin Cl6.4 from Californiconus californicus (California cone).